We begin with the raw amino-acid sequence, 360 residues long: Phospho-N-acetylmuramoyl-pentapeptide-transferase (360 aa).

The next 10 helical transmembrane spans lie at alanine 26–glutamate 46, methionine 74–glycine 94, tyrosine 97–tyrosine 117, tyrosine 134–asparagine 154, valine 168–serine 188, glycine 199–serine 219, serine 236–phenylalanine 256, valine 263–leucine 283, isoleucine 288–valine 308, and valine 338–lysine 358.

This sequence belongs to the glycosyltransferase 4 family. MraY subfamily. Mg(2+) is required as a cofactor.

Its subcellular location is the cell inner membrane. It carries out the reaction UDP-N-acetyl-alpha-D-muramoyl-L-alanyl-gamma-D-glutamyl-meso-2,6-diaminopimeloyl-D-alanyl-D-alanine + di-trans,octa-cis-undecaprenyl phosphate = di-trans,octa-cis-undecaprenyl diphospho-N-acetyl-alpha-D-muramoyl-L-alanyl-D-glutamyl-meso-2,6-diaminopimeloyl-D-alanyl-D-alanine + UMP. Its pathway is cell wall biogenesis; peptidoglycan biosynthesis. Catalyzes the initial step of the lipid cycle reactions in the biosynthesis of the cell wall peptidoglycan: transfers peptidoglycan precursor phospho-MurNAc-pentapeptide from UDP-MurNAc-pentapeptide onto the lipid carrier undecaprenyl phosphate, yielding undecaprenyl-pyrophosphoryl-MurNAc-pentapeptide, known as lipid I. The sequence is that of Phospho-N-acetylmuramoyl-pentapeptide-transferase from Shewanella oneidensis (strain ATCC 700550 / JCM 31522 / CIP 106686 / LMG 19005 / NCIMB 14063 / MR-1).